A 269-amino-acid chain; its full sequence is 3-methyl-2-oxobutanoate hydroxymethyltransferase (269 aa).

Positions 46 and 85 each coordinate Mg(2+). 3-methyl-2-oxobutanoate is bound by residues 46–47 (DS), Asp85, and Lys114. Glu116 lines the Mg(2+) pocket. The active-site Proton acceptor is the Glu183.

This sequence belongs to the PanB family. Homodecamer; pentamer of dimers. It depends on Mg(2+) as a cofactor.

The protein localises to the cytoplasm. It carries out the reaction 3-methyl-2-oxobutanoate + (6R)-5,10-methylene-5,6,7,8-tetrahydrofolate + H2O = 2-dehydropantoate + (6S)-5,6,7,8-tetrahydrofolate. Its pathway is cofactor biosynthesis; (R)-pantothenate biosynthesis; (R)-pantoate from 3-methyl-2-oxobutanoate: step 1/2. Catalyzes the reversible reaction in which hydroxymethyl group from 5,10-methylenetetrahydrofolate is transferred onto alpha-ketoisovalerate to form ketopantoate. The sequence is that of 3-methyl-2-oxobutanoate hydroxymethyltransferase from Methylococcus capsulatus (strain ATCC 33009 / NCIMB 11132 / Bath).